The chain runs to 160 residues: SsrA-binding protein (160 aa).

The segment at 133 to 160 (KKLHDKRETEKERDWNRQKSRLLKGNSQ) is disordered. Over residues 137–149 (DKRETEKERDWNR) the composition is skewed to basic and acidic residues.

The protein belongs to the SmpB family.

Its subcellular location is the cytoplasm. Functionally, required for rescue of stalled ribosomes mediated by trans-translation. Binds to transfer-messenger RNA (tmRNA), required for stable association of tmRNA with ribosomes. tmRNA and SmpB together mimic tRNA shape, replacing the anticodon stem-loop with SmpB. tmRNA is encoded by the ssrA gene; the 2 termini fold to resemble tRNA(Ala) and it encodes a 'tag peptide', a short internal open reading frame. During trans-translation Ala-aminoacylated tmRNA acts like a tRNA, entering the A-site of stalled ribosomes, displacing the stalled mRNA. The ribosome then switches to translate the ORF on the tmRNA; the nascent peptide is terminated with the 'tag peptide' encoded by the tmRNA and targeted for degradation. The ribosome is freed to recommence translation, which seems to be the essential function of trans-translation. This Agrobacterium fabrum (strain C58 / ATCC 33970) (Agrobacterium tumefaciens (strain C58)) protein is SsrA-binding protein.